Reading from the N-terminus, the 299-residue chain is Regucalcin (299 aa).

An a divalent metal cation-binding site is contributed by Glu18. The substrate site is built by Arg101, Asn103, and Glu121. Lys144 is subject to N6-succinyllysine. 2 residues coordinate a divalent metal cation: Asn154 and Asp204. The active-site Proton donor/acceptor is Asp204. N6-succinyllysine is present on residues Lys244 and Lys253.

This sequence belongs to the SMP-30/CGR1 family. As to quaternary structure, monomer. Zn(2+) serves as cofactor. Requires Mn(2+) as cofactor. It depends on Ca(2+) as a cofactor. The cofactor is Mg(2+). In terms of tissue distribution, mainly present in the liver. Weak expression was found in the brain, lung and kidney.

Its subcellular location is the cytoplasm. The enzyme catalyses D-glucono-1,5-lactone + H2O = D-gluconate + H(+). Its pathway is cofactor biosynthesis; L-ascorbate biosynthesis via UDP-alpha-D-glucuronate pathway; L-ascorbate from UDP-alpha-D-glucuronate: step 3/4. Its function is as follows. Gluconolactonase with low activity towards other sugar lactones, including gulonolactone and galactonolactone. Catalyzes a key step in ascorbic acid (vitamin C) biosynthesis. Can also hydrolyze diisopropyl phosphorofluoridate and phenylacetate (in vitro). Calcium-binding protein. Modulates Ca(2+) signaling, and Ca(2+)-dependent cellular processes and enzyme activities. The protein is Regucalcin (Rgn) of Mus musculus (Mouse).